Here is a 428-residue protein sequence, read N- to C-terminus: L-gulono-1,4-lactone dehydrogenase (428 aa).

One can recognise an FAD-binding PCMH-type domain in the interval 12 to 179; the sequence is QVCAPSAIVR…SQVTLQTVPL (168 aa).

Belongs to the oxygen-dependent FAD-linked oxidoreductase family. Requires a divalent metal cation as cofactor.

The catalysed reaction is L-gulono-1,4-lactone + 2 Fe(III)-[cytochrome c] = L-ascorbate + 2 Fe(II)-[cytochrome c] + 3 H(+). The protein operates within cofactor biosynthesis; L-ascorbate biosynthesis. Its function is as follows. Oxidizes L-gulono-1,4-lactone to L-xylo-hexulonolactone which spontaneously isomerizes to L-ascorbate. The protein is L-gulono-1,4-lactone dehydrogenase of Mycobacterium tuberculosis (strain CDC 1551 / Oshkosh).